The sequence spans 770 residues: Probable methyltransferase PMT24 (770 aa).

Topologically, residues methionine 1 to tyrosine 17 are cytoplasmic. The chain crosses the membrane as a helical; Signal-anchor for type II membrane protein span at residues glycine 18–methionine 38. The Lumenal portion of the chain corresponds to serine 39 to alanine 770. 2 stretches are compositionally biased toward basic and acidic residues: residues glutamate 54–glutamate 81 and asparagine 93–aspartate 164. Positions glutamate 54 to glutamine 223 are disordered. N-linked (GlcNAc...) asparagine glycans are attached at residues asparagine 160 and asparagine 166. Positions glutamate 212–glutamine 223 are enriched in polar residues. Asparagine 244 and asparagine 363 each carry an N-linked (GlcNAc...) asparagine glycan.

Belongs to the methyltransferase superfamily.

It localises to the golgi apparatus membrane. In Arabidopsis thaliana (Mouse-ear cress), this protein is Probable methyltransferase PMT24.